A 379-amino-acid polypeptide reads, in one-letter code: Queuine tRNA-ribosyltransferase (379 aa).

D94 (proton acceptor) is an active-site residue. Substrate is bound by residues D94–F98, D148, Q191, and G218. Residues G249 to S255 are RNA binding. D268 (nucleophile) is an active-site residue. The tract at residues T273–R277 is RNA binding; important for wobble base 34 recognition. Residues C306, C308, C311, and H337 each contribute to the Zn(2+) site.

Belongs to the queuine tRNA-ribosyltransferase family. In terms of assembly, homodimer. Within each dimer, one monomer is responsible for RNA recognition and catalysis, while the other monomer binds to the replacement base PreQ1. It depends on Zn(2+) as a cofactor.

It carries out the reaction 7-aminomethyl-7-carbaguanine + guanosine(34) in tRNA = 7-aminomethyl-7-carbaguanosine(34) in tRNA + guanine. The protein operates within tRNA modification; tRNA-queuosine biosynthesis. Its function is as follows. Catalyzes the base-exchange of a guanine (G) residue with the queuine precursor 7-aminomethyl-7-deazaguanine (PreQ1) at position 34 (anticodon wobble position) in tRNAs with GU(N) anticodons (tRNA-Asp, -Asn, -His and -Tyr). Catalysis occurs through a double-displacement mechanism. The nucleophile active site attacks the C1' of nucleotide 34 to detach the guanine base from the RNA, forming a covalent enzyme-RNA intermediate. The proton acceptor active site deprotonates the incoming PreQ1, allowing a nucleophilic attack on the C1' of the ribose to form the product. After dissociation, two additional enzymatic reactions on the tRNA convert PreQ1 to queuine (Q), resulting in the hypermodified nucleoside queuosine (7-(((4,5-cis-dihydroxy-2-cyclopenten-1-yl)amino)methyl)-7-deazaguanosine). This Bacillus mycoides (strain KBAB4) (Bacillus weihenstephanensis) protein is Queuine tRNA-ribosyltransferase.